Here is a 265-residue protein sequence, read N- to C-terminus: Pyrroline-5-carboxylate reductase (265 aa).

This sequence belongs to the pyrroline-5-carboxylate reductase family.

It is found in the cytoplasm. The enzyme catalyses L-proline + NADP(+) = (S)-1-pyrroline-5-carboxylate + NADPH + 2 H(+). The catalysed reaction is L-proline + NAD(+) = (S)-1-pyrroline-5-carboxylate + NADH + 2 H(+). It participates in amino-acid biosynthesis; L-proline biosynthesis; L-proline from L-glutamate 5-semialdehyde: step 1/1. Its function is as follows. Catalyzes the reduction of 1-pyrroline-5-carboxylate (PCA) to L-proline. In Aquifex aeolicus (strain VF5), this protein is Pyrroline-5-carboxylate reductase.